The primary structure comprises 201 residues: LexA repressor (201 aa).

A DNA-binding region (H-T-H motif) is located at residues 28-48; sequence RAEIAARLGFRSPNAAEEHLK. Catalysis depends on for autocatalytic cleavage activity residues Ser118 and Lys155.

Belongs to the peptidase S24 family. Homodimer.

The enzyme catalyses Hydrolysis of Ala-|-Gly bond in repressor LexA.. Represses a number of genes involved in the response to DNA damage (SOS response), including recA and lexA. In the presence of single-stranded DNA, RecA interacts with LexA causing an autocatalytic cleavage which disrupts the DNA-binding part of LexA, leading to derepression of the SOS regulon and eventually DNA repair. The protein is LexA repressor of Photorhabdus laumondii subsp. laumondii (strain DSM 15139 / CIP 105565 / TT01) (Photorhabdus luminescens subsp. laumondii).